The sequence spans 226 residues: UPF0758 protein gbs1168 (226 aa).

Positions 103 to 225 constitute an MPN domain; sequence QILSSEQLAR…YYSFREEADI (123 aa). Positions 174, 176, and 187 each coordinate Zn(2+). Positions 174–187 match the JAMM motif motif; it reads HNHPSGSPNPSESD.

This sequence belongs to the UPF0758 family.

This Streptococcus agalactiae serotype III (strain NEM316) protein is UPF0758 protein gbs1168.